The primary structure comprises 472 residues: PEP-dependent dihydroxyacetone kinase, phosphoryl donor subunit DhaM (472 aa).

The 135-residue stretch at 1–135 folds into the PTS EIIA type-4 domain; it reads MVNLVIVSHS…HALEAKREQL (135 aa). The active-site Tele-phosphohistidine intermediate is the H9. Residues 155-242 form the HPr domain; the sequence is ARSLAVVIKN…QLAEDNFGET (88 aa). H169 acts as the Pros-phosphohistidine intermediate in catalysis. The segment at 264 to 472 is PTS EI-like, N-terminal part; that stretch reads QPVLCTVQAK…VKTQRFNRQG (209 aa). Residue H430 is the Tele-phosphohistidine intermediate of the active site.

It belongs to the PEP-utilizing enzyme family. In terms of assembly, homodimer. The dihydroxyacetone kinase complex is composed of a homodimer of DhaM, a homodimer of DhaK and the subunit DhaL.

It catalyses the reaction dihydroxyacetone + phosphoenolpyruvate = dihydroxyacetone phosphate + pyruvate. It participates in polyol metabolism; glycerol degradation. Component of the dihydroxyacetone kinase complex, which is responsible for the phosphoenolpyruvate (PEP)-dependent phosphorylation of dihydroxyacetone. DhaM serves as the phosphoryl donor. Is phosphorylated by phosphoenolpyruvate in an EI- and HPr-dependent reaction, and a phosphorelay system on histidine residues finally leads to phosphoryl transfer to DhaL and dihydroxyacetone. This Escherichia coli (strain K12) protein is PEP-dependent dihydroxyacetone kinase, phosphoryl donor subunit DhaM.